A 234-amino-acid chain; its full sequence is Homeobox protein ceh-51 (234 aa).

Disordered stretches follow at residues 128–154 (PPSF…RTPF) and 209–234 (QIKQ…HVIS). Positions 147–206 (RRGARTPFSDSQLYALRTRFEQCDTIKVDERRKLGAVIGLSPEQIKIWFQNRRFKLRKEK) form a DNA-binding region, homeobox. A compositionally biased stretch (basic and acidic residues) spans 220–234 (SAKEEAEEDQKHVIS).

The protein belongs to the NK-2 homeobox family.

Its subcellular location is the nucleus. Functionally, required for mesoderm development, including specification of muscle and coelomocyte precursors. This chain is Homeobox protein ceh-51, found in Caenorhabditis elegans.